A 400-amino-acid chain; its full sequence is Na(+)/H(+) antiporter NhaA 1 (400 aa).

The next 11 membrane-spanning stretches (helical) occupy residues 25–45 (IVLMFCAIIAIIIANSNFSSM), 67–87 (ILHWINDGLMAIFFLVVGMEI), 103–123 (ILPVSAAIGGMVVPAIIYALF), 130–150 (IIGWGIPMATDIAFALGILSL), 159–179 (IIIFLTALAIVDDLGAIIVIA), 184–204 (SEISWIALILGLIIFLAIILA), 213–233 (WLYIIFGIALWICFLKSGVHE), 264–284 (VLTPLSSFIIMPIFALANSGI), 303–323 (IIFGLFIGKQIGIFGASYILV), 339–359 (LYGASVLGGIGFTMSLFVSSL), and 372–392 (ISIIIASILSAAFGAAIFKII).

This sequence belongs to the NhaA Na(+)/H(+) (TC 2.A.33) antiporter family.

The protein resides in the cell membrane. It catalyses the reaction Na(+)(in) + 2 H(+)(out) = Na(+)(out) + 2 H(+)(in). Its function is as follows. Na(+)/H(+) antiporter that extrudes sodium in exchange for external protons. The polypeptide is Na(+)/H(+) antiporter NhaA 1 (Clostridium beijerinckii (strain ATCC 51743 / NCIMB 8052) (Clostridium acetobutylicum)).